The primary structure comprises 268 residues: GTP cyclohydrolase FolE2 (268 aa).

Belongs to the GTP cyclohydrolase IV family.

The enzyme catalyses GTP + H2O = 7,8-dihydroneopterin 3'-triphosphate + formate + H(+). Its pathway is cofactor biosynthesis; 7,8-dihydroneopterin triphosphate biosynthesis; 7,8-dihydroneopterin triphosphate from GTP: step 1/1. Functionally, converts GTP to 7,8-dihydroneopterin triphosphate. The chain is GTP cyclohydrolase FolE2 from Paraburkholderia xenovorans (strain LB400).